We begin with the raw amino-acid sequence, 276 residues long: Protein-glutamine gamma-glutamyltransferase (276 aa).

Belongs to the bacillus TGase family.

It catalyses the reaction L-glutaminyl-[protein] + L-lysyl-[protein] = [protein]-L-lysyl-N(6)-5-L-glutamyl-[protein] + NH4(+). Functionally, probably plays a role in the assembly of the spore coat proteins by catalyzing epsilon-(gamma-glutamyl)lysine cross-links. This is Protein-glutamine gamma-glutamyltransferase from Bacillus cereus (strain AH187).